The sequence spans 338 residues: Cap-specific mRNA (nucleoside-2'-O-)-methyltransferase (338 aa).

Tyr-22 serves as a coordination point for mRNA. S-adenosyl-L-methionine is bound by residues Gln-39, Tyr-66, Gly-68, Gly-72, Asp-95, Arg-97, Val-116, and Asp-138. A binding to NPH-I region spans residues 169–249 (PAASSLKWRC…NKIIRNRIII (81 aa)). Residues 169–333 (PAASSLKWRC…NTKKSVRGNK (165 aa)) are binding to Rap94. The For methyltransferase activity role is filled by Lys-175. MRNA contacts are provided by residues 177 to 180 (RCPF), Asp-182, 205 to 207 (SAE), and Glu-233. The disordered stretch occupies residues 305–338 (HHEPTQRKVPSKNTMLKSRNTKKSVRGNKQGRRT). Basic residues predominate over residues 323-338 (RNTKKSVRGNKQGRRT).

The protein belongs to the class I-like SAM-binding methyltransferase superfamily. Poxvirus/kinetoplastid 2'-O-MTase family. In terms of assembly, interacts with poly(A) polymerase catalytic subunit OPG063. Interacts with OPG109 and OPG123; these interactions might help linking transcription to capping and polyadenylation.

It is found in the virion. It carries out the reaction a 5'-end (N(7)-methyl 5'-triphosphoguanosine)-ribonucleoside in mRNA + S-adenosyl-L-methionine = a 5'-end (N(7)-methyl 5'-triphosphoguanosine)-(2'-O-methyl-ribonucleoside) in mRNA + S-adenosyl-L-homocysteine + H(+). In terms of biological role, displays methyltransferase, positive regulation of the poly(A) polymerase and transcription elongation activities. Involved in the modification of both mRNA ends and in intermediate and late gene positive transcription elongation. At the mRNAs 5' end, methylates the ribose 2' OH group of the first transcribed nucleotide, thereby producing a 2'-O-methylpurine cap. At the 3' end, functions as a processivity factor which stimulates the activity of the viral poly(A) polymerase OPG063 that creates mRNA's poly(A) tail. In the presence of OPG102, OPG063 does not dissociate from the RNA allowing tail elongation to around 250 adenylates. In Oryctolagus cuniculus (Rabbit), this protein is Cap-specific mRNA (nucleoside-2'-O-)-methyltransferase (OPG102).